The chain runs to 344 residues: HTH-type transcriptional repressor MelR (344 aa).

An HTH lacI-type domain is found at 2–58 (VRIKDIALKAKVSSATVSRILNEDESLSVAGETRQRVINIAEELGYQTVAKRRKSRG). The segment at residues 4 to 23 (IKDIALKAKVSSATVSRILN) is a DNA-binding region (H-T-H motif).

It localises to the cytoplasm. In terms of biological role, represses the melibiose operon melREDCA in the absence of melibiose or raffinose. Binds to two binding sites at the promoter region of the operon. The chain is HTH-type transcriptional repressor MelR from Bacillus subtilis (strain 168).